A 570-amino-acid chain; its full sequence is Sulfite reductase [NADPH] hemoprotein beta-component (570 aa).

Cys434, Cys440, Cys479, and Cys483 together coordinate [4Fe-4S] cluster. A siroheme-binding site is contributed by Cys483.

This sequence belongs to the nitrite and sulfite reductase 4Fe-4S domain family. As to quaternary structure, alpha(8)-beta(8). The alpha component is a flavoprotein, the beta component is a hemoprotein. It depends on siroheme as a cofactor. [4Fe-4S] cluster is required as a cofactor.

It carries out the reaction hydrogen sulfide + 3 NADP(+) + 3 H2O = sulfite + 3 NADPH + 4 H(+). Its pathway is sulfur metabolism; hydrogen sulfide biosynthesis; hydrogen sulfide from sulfite (NADPH route): step 1/1. In terms of biological role, component of the sulfite reductase complex that catalyzes the 6-electron reduction of sulfite to sulfide. This is one of several activities required for the biosynthesis of L-cysteine from sulfate. This chain is Sulfite reductase [NADPH] hemoprotein beta-component, found in Salmonella arizonae (strain ATCC BAA-731 / CDC346-86 / RSK2980).